Reading from the N-terminus, the 400-residue chain is Diphosphomevalonate decarboxylase (400 aa).

Residue Ala2 is modified to N-acetylalanine. (R)-5-diphosphomevalonate-binding positions include 23–26 (YWGK), Arg78, 156–161 (SGSACR), and Thr212.

The protein belongs to the diphosphomevalonate decarboxylase family. Homodimer.

It localises to the cytoplasm. The catalysed reaction is (R)-5-diphosphomevalonate + ATP = isopentenyl diphosphate + ADP + phosphate + CO2. Its pathway is steroid biosynthesis; cholesterol biosynthesis. Catalyzes the ATP dependent decarboxylation of (R)-5-diphosphomevalonate to form isopentenyl diphosphate (IPP). Functions in the mevalonate (MVA) pathway leading to isopentenyl diphosphate (IPP), a key precursor for the biosynthesis of isoprenoids and sterol synthesis. The protein is Diphosphomevalonate decarboxylase (MVD) of Bos taurus (Bovine).